Consider the following 163-residue polypeptide: Regulatory protein RecX (163 aa).

Positions 1-21 (MSDAEDIPTGRKRRPREQTPV) are disordered.

It belongs to the RecX family.

The protein localises to the cytoplasm. Its function is as follows. Modulates RecA activity. This Stenotrophomonas maltophilia (strain K279a) protein is Regulatory protein RecX.